The following is a 292-amino-acid chain: Sulfofructosephosphate aldolase (292 aa).

The active-site Schiff-base intermediate with substrate is the K193.

This sequence belongs to the aldolase LacD family. Homotetramer.

It catalyses the reaction 6-deoxy-6-sulfo-D-fructose 1-phosphate = (2S)-3-sulfolactaldehyde + dihydroxyacetone phosphate. Functionally, cleaves 6-deoxy-6-sulfo-D-fructose 1-phosphate (SFP) to form dihydroxyacetone phosphate (DHAP) and 3-sulfolactaldehyde (SLA). The protein is Sulfofructosephosphate aldolase (yihT) of Salmonella typhi.